The following is a 139-amino-acid chain: ATP synthase epsilon chain (139 aa).

This sequence belongs to the ATPase epsilon chain family. As to quaternary structure, F-type ATPases have 2 components, CF(1) - the catalytic core - and CF(0) - the membrane proton channel. CF(1) has five subunits: alpha(3), beta(3), gamma(1), delta(1), epsilon(1). CF(0) has three main subunits: a, b and c.

Its subcellular location is the cell inner membrane. Produces ATP from ADP in the presence of a proton gradient across the membrane. The sequence is that of ATP synthase epsilon chain from Haemophilus ducreyi (strain 35000HP / ATCC 700724).